The chain runs to 308 residues: Dioxygenase peniF (308 aa).

The Fe cation site is built by His144 and His225.

The protein belongs to the PhyH family. As to quaternary structure, homodimer. Fe cation serves as cofactor.

Functionally, dioxygenase; part of the gene cluster that mediates the biosynthesis of penifulvin A, a potent insecticidal sesquiterpene that features a [5.5.5.6]dioxafenestrane ring. The first step of the pathway is performed by the sesquiterpene cyclase peniA that generates the angular triquinane scaffold silphinene via cyclization of the linear farnesyl pyrophosphate (FPP). The cytochrome P450 monooxygenase peniB and the flavin-dependent monooxygenase peniC then catalyze a series of oxidation reactions to transform silphinene into penifulvin A. The dioxygenases peniD and peniF, as well as the acetyltransferase peniE, do not seem to be involved in the biosynthesis of penifulvin A. This is Dioxygenase peniF from Penicillium patulum (Penicillium griseofulvum).